The sequence spans 214 residues: Ribosomal RNA large subunit methyltransferase E (214 aa).

Glycine 60, tryptophan 62, aspartate 86, aspartate 102, and aspartate 127 together coordinate S-adenosyl-L-methionine. Lysine 167 serves as the catalytic Proton acceptor.

The protein belongs to the class I-like SAM-binding methyltransferase superfamily. RNA methyltransferase RlmE family.

It localises to the cytoplasm. The catalysed reaction is uridine(2552) in 23S rRNA + S-adenosyl-L-methionine = 2'-O-methyluridine(2552) in 23S rRNA + S-adenosyl-L-homocysteine + H(+). In terms of biological role, specifically methylates the uridine in position 2552 of 23S rRNA at the 2'-O position of the ribose in the fully assembled 50S ribosomal subunit. The protein is Ribosomal RNA large subunit methyltransferase E of Herminiimonas arsenicoxydans.